A 285-amino-acid chain; its full sequence is Glutamate racemase (285 aa).

Substrate-binding positions include 28–29 (DS) and 60–61 (YG). Cys-92 acts as the Proton donor/acceptor in catalysis. 93–94 (NT) provides a ligand contact to substrate. The active-site Proton donor/acceptor is the Cys-204. 205-206 (TH) serves as a coordination point for substrate.

The protein belongs to the aspartate/glutamate racemases family.

It carries out the reaction L-glutamate = D-glutamate. It participates in cell wall biogenesis; peptidoglycan biosynthesis. Its function is as follows. Provides the (R)-glutamate required for cell wall biosynthesis. The protein is Glutamate racemase of Escherichia fergusonii (strain ATCC 35469 / DSM 13698 / CCUG 18766 / IAM 14443 / JCM 21226 / LMG 7866 / NBRC 102419 / NCTC 12128 / CDC 0568-73).